A 211-amino-acid polypeptide reads, in one-letter code: Probable GTP-binding protein EngB (211 aa).

The EngB-type G domain occupies 26 to 200 (SGIEVAFAGR…RQKLDNWFST (175 aa)). Residues 34–41 (GRSNAGKS), 61–65 (GRTQL), 79–82 (DLPG), 146–149 (TKAD), and 179–181 (FSS) each bind GTP. Serine 41 and threonine 63 together coordinate Mg(2+).

Belongs to the TRAFAC class TrmE-Era-EngA-EngB-Septin-like GTPase superfamily. EngB GTPase family. Requires Mg(2+) as cofactor.

Its function is as follows. Necessary for normal cell division and for the maintenance of normal septation. The protein is Probable GTP-binding protein EngB of Pectobacterium carotovorum subsp. carotovorum (strain PC1).